The following is a 329-amino-acid chain: MFRGPLDTPWAADVSPSGPRGIKAGRSALLVPILGSIWGAWRPEPGATRYRTLDPMAAVRSSSRLTPFSIQAILNRKEERAHTFPRLATAVSPACCWRIFGESEAEGLGSPCGGAPGAGAGGEPSGWDSDSALSEEGELGRPGDIGERKKQRPLEARAKGEDEEETPGCSDCEIGASVPDPSPPDEDPKCEQLMLEPPKQRKKRSRAAFSHAQVFELERRFNHQRYLSGPERADLAASLKLTETQVKIWFQNRRYKTKRRQMATDLLAAAPAAKKVAVKVLVRDDQRQYHPGEVLHPSLLPLQAPYFYPYYCALPGWTLSAAACSRGTP.

The segment at 107 to 188 is disordered; it reads GLGSPCGGAP…PDPSPPDEDP (82 aa). Residues 110-124 are compositionally biased toward gly residues; it reads SPCGGAPGAGAGGEP. Basic and acidic residues predominate over residues 138–160; sequence ELGRPGDIGERKKQRPLEARAKG. Positions 202–261 form a DNA-binding region, homeobox; it reads KKRSRAAFSHAQVFELERRFNHQRYLSGPERADLAASLKLTETQVKIWFQNRRYKTKRRQ.

Belongs to the NK-3 homeobox family. First expressed in developing facial cartilage in early tailbud embryos, with expression localized to the basihyobranchial, palatoquadrate and possibly Meckel's cartilages. Shortly after, a second area of expression is seen in the musculature of the anterior gut. During late embryogenesis, gut expression extends into hindgut tissues. In adults, expressed at a high level in the kidney, pancreas, spleen and stomach and at a slightly lower level in the intestine, skeletal muscle and tongue. Adult heart, liver and lung show little or no expression.

Its subcellular location is the nucleus. The sequence is that of Homeobox protein Nkx-3.2 (nkx3-2) from Xenopus laevis (African clawed frog).